The following is a 118-amino-acid chain: Large ribosomal subunit protein bL20 (118 aa).

The protein belongs to the bacterial ribosomal protein bL20 family.

In terms of biological role, binds directly to 23S ribosomal RNA and is necessary for the in vitro assembly process of the 50S ribosomal subunit. It is not involved in the protein synthesizing functions of that subunit. The sequence is that of Large ribosomal subunit protein bL20 from Aliarcobacter butzleri (strain RM4018) (Arcobacter butzleri).